Here is a 540-residue protein sequence, read N- to C-terminus: Putative F-box/LRR-repeat protein At5g41840 (540 aa).

An F-box domain is found at Gly13 to Ser61. LRR repeat units lie at residues Phe80 to Cys105, Arg137 to Phe165, Tyr189 to Asn214, Trp217 to Arg242, Tyr254 to Asp282, Ile329 to Thr360, and Thr361 to Gly386.

The protein is Putative F-box/LRR-repeat protein At5g41840 of Arabidopsis thaliana (Mouse-ear cress).